Reading from the N-terminus, the 263-residue chain is Small ribosomal subunit protein uS2 (263 aa).

It belongs to the universal ribosomal protein uS2 family.

This chain is Small ribosomal subunit protein uS2, found in Roseiflexus castenholzii (strain DSM 13941 / HLO8).